A 138-amino-acid chain; its full sequence is MVKLIPRLSSRRNGRIRLRKNTRKISQGVIHIQASLQNTIVTVTDVRGRVVSWASAGSAGFKGTTRRTPFAAQTAATNAIRTAINHGMREADVLIKGPGLGRDAALRAIRRSGIRLELILDVTPMPHNGCRPPKKRRV.

Belongs to the universal ribosomal protein uS11 family. As to quaternary structure, part of the 30S ribosomal subunit.

It localises to the plastid. In Cuscuta gronovii (Common dodder), this protein is Small ribosomal subunit protein uS11c.